Reading from the N-terminus, the 102-residue chain is Citrate lyase acyl carrier protein (102 aa).

O-(phosphoribosyl dephospho-coenzyme A)serine is present on Ser14.

This sequence belongs to the CitD family. In terms of assembly, oligomer with a subunit composition of (alpha,beta,gamma)6.

The protein localises to the cytoplasm. Functionally, covalent carrier of the coenzyme of citrate lyase. This Streptococcus mutans serotype c (strain ATCC 700610 / UA159) protein is Citrate lyase acyl carrier protein.